The chain runs to 668 residues: Penicillin-binding protein 3 (668 aa).

Residues 7–23 (LLVFLCVGLIGLIGCSK) form a helical membrane-spanning segment. Serine 410 acts as the Acyl-ester intermediate in catalysis.

Belongs to the transpeptidase family.

It localises to the cell membrane. Its subcellular location is the forespore inner membrane. The protein resides in the forespore outer membrane. It is found in the membrane raft. It carries out the reaction Preferential cleavage: (Ac)2-L-Lys-D-Ala-|-D-Ala. Also transpeptidation of peptidyl-alanyl moieties that are N-acyl substituents of D-alanine.. It functions in the pathway cell wall biogenesis; peptidoglycan biosynthesis. Its function is as follows. Penicillin-binding proteins (PBPs) function in the late steps of murein biosynthesis. Probably required for both cortical and vegetative peptidoglycan synthesis. Although not usually required for cell division, in the absence of PBP 2B (pbpB) it becomes essential. Confers resistance to oxacillin and cephalexin. The chain is Penicillin-binding protein 3 from Bacillus subtilis (strain 168).